Here is a 310-residue protein sequence, read N- to C-terminus: Aspartate carbamoyltransferase catalytic subunit 1 (310 aa).

Carbamoyl phosphate contacts are provided by Arg55 and Thr56. L-aspartate is bound at residue Lys85. Carbamoyl phosphate-binding residues include Arg106, His134, and Gln137. Positions 167 and 228 each coordinate L-aspartate. Residues Leu266 and Pro267 each coordinate carbamoyl phosphate.

It belongs to the aspartate/ornithine carbamoyltransferase superfamily. ATCase family. In terms of assembly, heterododecamer (2C3:3R2) of six catalytic PyrB chains organized as two trimers (C3), and six regulatory PyrI chains organized as three dimers (R2).

The catalysed reaction is carbamoyl phosphate + L-aspartate = N-carbamoyl-L-aspartate + phosphate + H(+). Its pathway is pyrimidine metabolism; UMP biosynthesis via de novo pathway; (S)-dihydroorotate from bicarbonate: step 2/3. Its function is as follows. Catalyzes the condensation of carbamoyl phosphate and aspartate to form carbamoyl aspartate and inorganic phosphate, the committed step in the de novo pyrimidine nucleotide biosynthesis pathway. The sequence is that of Aspartate carbamoyltransferase catalytic subunit 1 from Shewanella halifaxensis (strain HAW-EB4).